The following is a 358-amino-acid chain: Phosphate acyltransferase (358 aa).

The protein belongs to the PlsX family. As to quaternary structure, homodimer. Probably interacts with PlsY.

The protein localises to the cytoplasm. The enzyme catalyses a fatty acyl-[ACP] + phosphate = an acyl phosphate + holo-[ACP]. The protein operates within lipid metabolism; phospholipid metabolism. Functionally, catalyzes the reversible formation of acyl-phosphate (acyl-PO(4)) from acyl-[acyl-carrier-protein] (acyl-ACP). This enzyme utilizes acyl-ACP as fatty acyl donor, but not acyl-CoA. This Escherichia fergusonii (strain ATCC 35469 / DSM 13698 / CCUG 18766 / IAM 14443 / JCM 21226 / LMG 7866 / NBRC 102419 / NCTC 12128 / CDC 0568-73) protein is Phosphate acyltransferase.